The chain runs to 142 residues: Putative FK506-binding protein 9-like protein (142 aa).

Residues 1 to 49 (MDMGLREMCVGEKRTVIIPPHLGYGEAGVDGEVPGSAVLVFDIELLELV) enclose the PPIase FKBP-type domain. EF-hand domains follow at residues 60-95 (WNGE…QVAS) and 105-140 (DAEL…AKQD). 5 residues coordinate Ca(2+): D118, N120, D122, K124, and E129.

The sequence is that of Putative FK506-binding protein 9-like protein (FKBP9P1) from Homo sapiens (Human).